Reading from the N-terminus, the 218-residue chain is Uracil-DNA glycosylase (218 aa).

Aspartate 59 (proton acceptor) is an active-site residue.

Belongs to the uracil-DNA glycosylase (UDG) superfamily. UNG family.

The protein resides in the cytoplasm. The catalysed reaction is Hydrolyzes single-stranded DNA or mismatched double-stranded DNA and polynucleotides, releasing free uracil.. Its function is as follows. Excises uracil residues from the DNA which can arise as a result of misincorporation of dUMP residues by DNA polymerase or due to deamination of cytosine. The sequence is that of Uracil-DNA glycosylase from Staphylococcus aureus (strain JH1).